The primary structure comprises 287 residues: 4,4'-diapophytoene synthase (287 aa).

(2E,6E)-farnesyl diphosphate is bound by residues 18 to 21, Y41, and R45; that span reads HSKS. Residues D48 and D52 each contribute to the Mg(2+) site. Residue Q165 participates in (2E,6E)-farnesyl diphosphate binding. Residue N168 coordinates Mg(2+). A (2E,6E)-farnesyl diphosphate-binding site is contributed by R171. Residue D172 participates in Mg(2+) binding. Y248 contacts (2E,6E)-farnesyl diphosphate.

This sequence belongs to the phytoene/squalene synthase family. CrtM subfamily. The cofactor is Mg(2+).

The enzyme catalyses 2 (2E,6E)-farnesyl diphosphate = 15-cis-4,4'-diapophytoene + 2 diphosphate. It participates in carotenoid biosynthesis; staphyloxanthin biosynthesis; staphyloxanthin from farnesyl diphosphate: step 1/5. In terms of biological role, involved in the biosynthesis of the yellow-orange carotenoid staphyloxanthin, which plays a role in the virulence via its protective function against oxidative stress. Catalyzes the head-to-head condensation of two molecules of farnesyl diphosphate (FPP) into the colorless C(30) carotenoid 4,4'-diapophytoene (dehydrosqualene). This chain is 4,4'-diapophytoene synthase, found in Staphylococcus aureus.